The following is a 353-amino-acid chain: MTAILERRESTSLWGRFCNWVTSTENRLYIGWFGVLMIPTLLTATSVFIIAFIAAPPVDIDGIREPVSGSLLYGNNIISGAIVPTSAAIGLHFYPIWEASSVDEWLYNGGPYELIVLHFLLGVACYMGREWELSFRLGMRPWIAVAYSAPVAAATAVFLIYPIGQGSFSDGMPLGISGTFNFMIVFQAEHNILMHPFHMLGVAGVFGGSLFSAMHGSLVTSSLIRETTENESANEGYRFGQEEETYNIVAAHGYFGRLIFQYASFNNSRSLHFFLAAWPVVGIWFTALGISTMAFNLNGFNFNQSVVDSQGRVINTWADIINRANLGMEVMHERNAHNFPLDLAAVEAPSTNG.

Thr2 carries the N-acetylthreonine modification. Thr2 is modified (phosphothreonine). 3 consecutive transmembrane segments (helical) span residues 29 to 46 (YIGW…TATS), 118 to 133 (HFLL…EWEL), and 142 to 156 (WIAV…AATA). A chlorophyll a-binding site is contributed by His118. Tyr126 contacts pheophytin a. Residues Asp170 and Glu189 each coordinate [CaMn4O5] cluster. A helical membrane pass occupies residues 197-218 (FHMLGVAGVFGGSLFSAMHGSL). His198 contacts chlorophyll a. A quinone-binding positions include His215 and 264 to 265 (SF). Residue His215 participates in Fe cation binding. A Fe cation-binding site is contributed by His272. Residues 274-288 (FLAAWPVVGIWFTAL) form a helical membrane-spanning segment. Residues His332, Glu333, Asp342, and Ala344 each coordinate [CaMn4O5] cluster. A propeptide spanning residues 345–353 (AVEAPSTNG) is cleaved from the precursor.

The protein belongs to the reaction center PufL/M/PsbA/D family. In terms of assembly, PSII is composed of 1 copy each of membrane proteins PsbA, PsbB, PsbC, PsbD, PsbE, PsbF, PsbH, PsbI, PsbJ, PsbK, PsbL, PsbM, PsbT, PsbX, PsbY, PsbZ, Psb30/Ycf12, at least 3 peripheral proteins of the oxygen-evolving complex and a large number of cofactors. It forms dimeric complexes. The D1/D2 heterodimer binds P680, chlorophylls that are the primary electron donor of PSII, and subsequent electron acceptors. It shares a non-heme iron and each subunit binds pheophytin, quinone, additional chlorophylls, carotenoids and lipids. D1 provides most of the ligands for the Mn4-Ca-O5 cluster of the oxygen-evolving complex (OEC). There is also a Cl(-1) ion associated with D1 and D2, which is required for oxygen evolution. The PSII complex binds additional chlorophylls, carotenoids and specific lipids. serves as cofactor. Tyr-161 forms a radical intermediate that is referred to as redox-active TyrZ, YZ or Y-Z. Post-translationally, C-terminally processed by CTPA; processing is essential to allow assembly of the oxygen-evolving complex and thus photosynthetic growth.

It is found in the plastid. Its subcellular location is the chloroplast thylakoid membrane. The enzyme catalyses 2 a plastoquinone + 4 hnu + 2 H2O = 2 a plastoquinol + O2. Its function is as follows. Photosystem II (PSII) is a light-driven water:plastoquinone oxidoreductase that uses light energy to abstract electrons from H(2)O, generating O(2) and a proton gradient subsequently used for ATP formation. It consists of a core antenna complex that captures photons, and an electron transfer chain that converts photonic excitation into a charge separation. The D1/D2 (PsbA/PsbD) reaction center heterodimer binds P680, the primary electron donor of PSII as well as several subsequent electron acceptors. This is Photosystem II protein D1 from Nymphaea alba (White water-lily).